A 343-amino-acid chain; its full sequence is Phenylalanine--tRNA ligase alpha subunit (343 aa).

Mg(2+) is bound at residue Glu264.

This sequence belongs to the class-II aminoacyl-tRNA synthetase family. Phe-tRNA synthetase alpha subunit type 1 subfamily. Tetramer of two alpha and two beta subunits. Requires Mg(2+) as cofactor.

It localises to the cytoplasm. The enzyme catalyses tRNA(Phe) + L-phenylalanine + ATP = L-phenylalanyl-tRNA(Phe) + AMP + diphosphate + H(+). The protein is Phenylalanine--tRNA ligase alpha subunit of Aromatoleum aromaticum (strain DSM 19018 / LMG 30748 / EbN1) (Azoarcus sp. (strain EbN1)).